We begin with the raw amino-acid sequence, 213 residues long: Phosphoribosylformylglycinamidine synthase subunit PurQ (213 aa).

Residues 5 to 213 (ACVVVYPGSN…FQSILNYLKR (209 aa)) form the Glutamine amidotransferase type-1 domain. Cysteine 86 functions as the Nucleophile in the catalytic mechanism. Catalysis depends on residues histidine 186 and glutamate 188.

Part of the FGAM synthase complex composed of 1 PurL, 1 PurQ and 2 PurS subunits.

It localises to the cytoplasm. The enzyme catalyses N(2)-formyl-N(1)-(5-phospho-beta-D-ribosyl)glycinamide + L-glutamine + ATP + H2O = 2-formamido-N(1)-(5-O-phospho-beta-D-ribosyl)acetamidine + L-glutamate + ADP + phosphate + H(+). It catalyses the reaction L-glutamine + H2O = L-glutamate + NH4(+). It participates in purine metabolism; IMP biosynthesis via de novo pathway; 5-amino-1-(5-phospho-D-ribosyl)imidazole from N(2)-formyl-N(1)-(5-phospho-D-ribosyl)glycinamide: step 1/2. Part of the phosphoribosylformylglycinamidine synthase complex involved in the purines biosynthetic pathway. Catalyzes the ATP-dependent conversion of formylglycinamide ribonucleotide (FGAR) and glutamine to yield formylglycinamidine ribonucleotide (FGAM) and glutamate. The FGAM synthase complex is composed of three subunits. PurQ produces an ammonia molecule by converting glutamine to glutamate. PurL transfers the ammonia molecule to FGAR to form FGAM in an ATP-dependent manner. PurS interacts with PurQ and PurL and is thought to assist in the transfer of the ammonia molecule from PurQ to PurL. In Thermotoga maritima (strain ATCC 43589 / DSM 3109 / JCM 10099 / NBRC 100826 / MSB8), this protein is Phosphoribosylformylglycinamidine synthase subunit PurQ.